The sequence spans 159 residues: Serine-protein kinase RsbW (159 aa).

Belongs to the anti-sigma-factor family.

It catalyses the reaction L-seryl-[protein] + ATP = O-phospho-L-seryl-[protein] + ADP + H(+). The catalysed reaction is L-threonyl-[protein] + ATP = O-phospho-L-threonyl-[protein] + ADP + H(+). Its function is as follows. Negative regulator of sigma-B activity. Phosphorylates and inactivates its specific antagonist protein, RsbV. Upon phosphorylation of RsbV, RsbW is released and binds to sigma-B, thereby blocking its ability to form an RNA polymerase holoenzyme (E-sigma-B). This is Serine-protein kinase RsbW from Staphylococcus epidermidis.